The following is a 604-amino-acid chain: Cell division cycle protein CDT1 (604 aa).

It belongs to the Cdt1 family. In terms of assembly, associates with the MCM2-7 complex. Interacts with MCM2, ORC1, ORC2 and ORC6.

The protein resides in the cytoplasm. It localises to the nucleus. In terms of biological role, DNA replication licensing factor, required for pre-replication complex assembly. Faithful duplication of the genetic material requires 'once per cell cycle' DNA replication initiation and elongation. Central to this control is the tightly regulated formation of prereplicative complexes (preRCs) at future origins of DNA replication. Required for the recruitment of the MCM2-7 helicase complex to the replication origins. This Saccharomyces cerevisiae (strain ATCC 204508 / S288c) (Baker's yeast) protein is Cell division cycle protein CDT1 (TAH11).